Reading from the N-terminus, the 308-residue chain is Ribosomal protein L11 methyltransferase (308 aa).

Residues threonine 148, glycine 169, aspartate 191, and asparagine 239 each contribute to the S-adenosyl-L-methionine site.

It belongs to the methyltransferase superfamily. PrmA family.

The protein localises to the cytoplasm. The enzyme catalyses L-lysyl-[protein] + 3 S-adenosyl-L-methionine = N(6),N(6),N(6)-trimethyl-L-lysyl-[protein] + 3 S-adenosyl-L-homocysteine + 3 H(+). Functionally, methylates ribosomal protein L11. The protein is Ribosomal protein L11 methyltransferase of Psychrobacter cryohalolentis (strain ATCC BAA-1226 / DSM 17306 / VKM B-2378 / K5).